A 611-amino-acid polypeptide reads, in one-letter code: Leukotriene A-4 hydrolase (611 aa).

Residue lysine 73 is modified to N6-acetyllysine. A peptide is bound by residues 135–137 (QCQ) and 267–272 (PYGGME). Residue histidine 296 participates in Zn(2+) binding. Glutamate 297 serves as the catalytic Proton acceptor. Zn(2+) contacts are provided by histidine 300 and glutamate 319. Lysine 337 bears the N6-acetyllysine mark. The active-site Proton donor is the tyrosine 384. Serine 416 is modified (phosphoserine). 564–566 (RMK) contacts a peptide. Position 573 is an N6-acetyllysine (lysine 573).

This sequence belongs to the peptidase M1 family. Zn(2+) serves as cofactor. Phosphorylation at Ser-416 inhibits enzymatic activity.

It is found in the cytoplasm. It catalyses the reaction leukotriene A4 + H2O = leukotriene B4. It functions in the pathway lipid metabolism; leukotriene B4 biosynthesis. Inhibited by bestatin. Subject to suicide inhibition by leukotriene A4. Functionally, epoxide hydrolase that catalyzes the final step in the biosynthesis of the pro-inflammatory mediator leukotriene B4. Also has aminopeptidase activity. The chain is Leukotriene A-4 hydrolase (LTA4H) from Chinchilla lanigera (Long-tailed chinchilla).